The primary structure comprises 566 residues: Protein downstream neighbor of Son (566 aa).

The segment at 1–110 (MALSVPGYSP…QPEAPVPFLD (110 aa)) is disordered. A phosphoserine mark is found at S28 and S34. Gly residues predominate over residues 62–72 (GGRGGGSGGGP). Low complexity predominate over residues 73-82 (AAARRNPFAR).

It belongs to the DONSON family. Component of the replisome complex composed of at least DONSON, MCM2, MCM7, PCNA and TICRR; interaction at least with PCNA occurs during DNA replication. As to expression, expressed in the brain, with higher levels in prenatal compared to adult brain.

The protein localises to the nucleus. Its function is as follows. Replisome component that maintains genome stability by protecting stalled or damaged replication forks. After the induction of replication stress, required for the stabilization of stalled replication forks, the efficient activation of the intra-S-phase and G/2M cell-cycle checkpoints and the maintenance of genome stability. The polypeptide is Protein downstream neighbor of Son (DONSON) (Homo sapiens (Human)).